The primary structure comprises 349 residues: 2-oxoglutarate and iron-dependent oxygenase domain-containing protein 2 (349 aa).

Positions 214–308 (DSHRAFVVKY…RWNLVVWLRA (95 aa)) constitute a Fe2OG dioxygenase domain. 3 residues coordinate Fe cation: H234, D236, and H289. R299 provides a ligand contact to 2-oxoglutarate.

It belongs to the OGFOD2 family. The cofactor is Fe(2+). L-ascorbate serves as cofactor.

The protein is 2-oxoglutarate and iron-dependent oxygenase domain-containing protein 2 (Ogfod2) of Mus musculus (Mouse).